The chain runs to 682 residues: Protein asunder (682 aa).

Positions 517 to 570 (NGARLKLSKAKDQYRLLYRELEQLIHLNATTVHHKNLLESLQSLRAAYGEAKSE) form a coiled coil. Residues 571 to 583 (PNSSLLRSYTESP) are compositionally biased toward polar residues. Residues 571–612 (PNSSLLRSYTESPHSPERLEPIPSGGSSGSNSNSLLKASKRR) form a disordered region. Residues 606–612 (LKASKRR) carry the Nuclear localization signal (NLS) motif.

The protein belongs to the Integrator subunit 13 family. In terms of assembly, belongs to the multiprotein complex Integrator, at least composed of IntS1, IntS2, IntS3, IntS4, omd/IntS5, IntS6, defl/IntS7, IntS8, IntS9, IntS10, IntS11, IntS12, asun/IntS13, IntS14 and IntS15. The core complex associates with protein phosphatase 2A subunits mts/PP2A and Pp2A-29B, to form the Integrator-PP2A (INTAC) complex. Post-translationally, phosphorylated.

The protein resides in the nucleus. The protein localises to the cytoplasm. Its subcellular location is the perinuclear region. Functionally, component of the integrator complex, a multiprotein complex that terminates RNA polymerase II (Pol II) transcription in the promoter-proximal region of genes. The integrator complex provides a quality checkpoint during transcription elongation by driving premature transcription termination of transcripts that are unfavorably configured for transcriptional elongation: the complex terminates transcription by (1) catalyzing dephosphorylation of the C-terminal domain (CTD) of Pol II subunit Polr2A/Rbp1 and Spt5, and (2) degrading the exiting nascent RNA transcript via endonuclease activity. The integrator complex is also involved in the 3'-end processing of the U7 snRNA, and also the spliceosomal snRNAs U1, U2, U4 and U5. In Drosophila ananassae (Fruit fly), this protein is Protein asunder (asun).